Consider the following 256-residue polypeptide: Probable fructose-2,6-bisphosphatase TIGAR A (256 aa).

H11 serves as the catalytic Tele-phosphohistidine intermediate. The Proton donor/acceptor role is filled by E89. The segment at 147-170 is disordered; it reads HQDKVQDGGTSSADESTEAPAGLA.

Belongs to the phosphoglycerate mutase family.

It is found in the cytoplasm. The protein localises to the nucleus. The protein resides in the mitochondrion. The enzyme catalyses beta-D-fructose 2,6-bisphosphate + H2O = beta-D-fructose 6-phosphate + phosphate. Its function is as follows. Fructose-bisphosphatase hydrolyzing fructose-2,6-bisphosphate as well as fructose-1,6-bisphosphate. Acts as a negative regulator of glycolysis by lowering intracellular levels of fructose-2,6-bisphosphate in a p53/TP53-dependent manner, resulting in the pentose phosphate pathway (PPP) activation and NADPH production. Contributes to the generation of reduced glutathione to cause a decrease in intracellular reactive oxygen species (ROS) content, correlating with its ability to protect cells from oxidative or metabolic stress-induced cell death. May play a role in mitophagy inhibition. This Danio rerio (Zebrafish) protein is Probable fructose-2,6-bisphosphatase TIGAR A.